The following is an 833-amino-acid chain: Zinc transporter ZIP10 (833 aa).

The first 25 residues, 1-25, serve as a signal peptide directing secretion; that stretch reads MKVHIHTKFCLICLLTFIFHHCNHC. Positions 30 to 48 are enriched in basic and acidic residues; the sequence is DHGPEELHRHHRGMTESES. Disordered stretches follow at residues 30 to 54 and 137 to 167; these read DHGP…FSVQ and AENH…IKAD. Residues 137–147 are compositionally biased toward polar residues; it reads AENHTTTSVTS. A compositionally biased stretch (basic and acidic residues) spans 152–167; the sequence is KCDPEKEAAELPIKAD. 2 N-linked (GlcNAc...) asparagine glycosylation sites follow: Asn-191 and Asn-198. The segment covering 200–209 has biased composition (basic and acidic residues); it reads SVAHSEHGEP. Disordered stretches follow at residues 200 to 257 and 271 to 335; these read SVAH…NHDH and RVHS…EDDR. A glycan (N-linked (GlcNAc...) asparagine) is linked at Asn-218. Residues 229–241 are compositionally biased toward basic residues; sequence VKVRRKEKGKRKK. Composition is skewed to basic and acidic residues over residues 281–315 and 326–335; these read HLPE…EAPH and SHKDQSEDDR. The N-linked (GlcNAc...) asparagine glycan is linked to Asn-341. The next 2 membrane-spanning stretches (helical) occupy residues 413–433 and 440–460; these read IISI…VPII and FLLT…ALLH. The disordered stretch occupies residues 466 to 485; it reads QGGHDHSHQHTHGHGHSHGH. A helical transmembrane segment spans residues 497 to 517; sequence VLKGLVALGGIYLLFIIEHCI. 2 positions are modified to phosphothreonine: Thr-538 and Thr-555. Ser-593 carries the post-translational modification Phosphoserine. The next 4 membrane-spanning stretches (helical) occupy residues 689 to 709, 734 to 754, 761 to 781, and 803 to 823; these read AIGA…IAVF, IVYN…GTAV, ITLW…LVDM, and FILQ…IALY.

It belongs to the ZIP transporter (TC 2.A.5) family. Interacts with SLC39A6. This interaction triggers cells to undergo EMT and mitosis. Found in a complex with SLC39A6, SLC39A10 and with the 'Ser-727' phosphorylated form of STAT3 throughout mitosis. Found in a complex with SLC39A6, SLC39A10 and with NCAM1; this complex controls NCAM1 phosphorylation and integration into focal adhesion complexes during epithelial-tomesenchymal transition. Found in a complex with SLC39A6, SLC39A10 and with GSK3B that controls NCAM1 phosphorylation. Undergoes N-terminal ectodomain shedding. As to expression, expressed in the liver, kidney and brain.

The protein resides in the cell membrane. It localises to the apical cell membrane. It catalyses the reaction Zn(2+)(in) = Zn(2+)(out). Functionally, zinc-influx transporter. When associated with SLC39A6, the heterodimer formed by SLC39A10 and SLC39A6 mediates cellular zinc uptake to trigger cells to undergo epithelial-to-mesenchymal transition (EMT). mediates cellular zinc uptake to trigger cells to undergo epithelial-to-mesenchymal transition (EMT). SLC39A10-SLC39A6 heterodimers play also an essentiel role in initiating mitosis by importing zinc into cells to initiate a pathway resulting in the onset of mitosis. Plays an important for both mature B-cell maintenance and humoral immune responses. When associated with SLC39A10, the heterodimer controls NCAM1 phosphorylation and integration into focal adhesion complexes during EMT. The protein is Zinc transporter ZIP10 of Mus musculus (Mouse).